A 177-amino-acid polypeptide reads, in one-letter code: Large ribosomal subunit protein uL6 (177 aa).

Belongs to the universal ribosomal protein uL6 family. As to quaternary structure, part of the 50S ribosomal subunit.

Functionally, this protein binds to the 23S rRNA, and is important in its secondary structure. It is located near the subunit interface in the base of the L7/L12 stalk, and near the tRNA binding site of the peptidyltransferase center. The chain is Large ribosomal subunit protein uL6 from Shewanella baltica (strain OS223).